The sequence spans 172 residues: Large ribosomal subunit protein uL10 (172 aa).

The protein belongs to the universal ribosomal protein uL10 family. In terms of assembly, part of the ribosomal stalk of the 50S ribosomal subunit. The N-terminus interacts with L11 and the large rRNA to form the base of the stalk. The C-terminus forms an elongated spine to which L12 dimers bind in a sequential fashion forming a multimeric L10(L12)X complex.

In terms of biological role, forms part of the ribosomal stalk, playing a central role in the interaction of the ribosome with GTP-bound translation factors. The protein is Large ribosomal subunit protein uL10 (rplJ) of Brucella abortus biovar 1 (strain 9-941).